A 351-amino-acid polypeptide reads, in one-letter code: UDP-3-O-acylglucosamine N-acyltransferase (351 aa).

The active-site Proton acceptor is the His-240.

This sequence belongs to the transferase hexapeptide repeat family. LpxD subfamily. As to quaternary structure, homotrimer.

The enzyme catalyses a UDP-3-O-[(3R)-3-hydroxyacyl]-alpha-D-glucosamine + a (3R)-hydroxyacyl-[ACP] = a UDP-2-N,3-O-bis[(3R)-3-hydroxyacyl]-alpha-D-glucosamine + holo-[ACP] + H(+). It functions in the pathway bacterial outer membrane biogenesis; LPS lipid A biosynthesis. Its function is as follows. Catalyzes the N-acylation of UDP-3-O-acylglucosamine using 3-hydroxyacyl-ACP as the acyl donor. Is involved in the biosynthesis of lipid A, a phosphorylated glycolipid that anchors the lipopolysaccharide to the outer membrane of the cell. The chain is UDP-3-O-acylglucosamine N-acyltransferase from Pseudomonas putida (strain ATCC 700007 / DSM 6899 / JCM 31910 / BCRC 17059 / LMG 24140 / F1).